The sequence spans 266 residues: Gasdermin bGSDM (266 aa).

Residue Cys-4 is the site of S-palmitoyl cysteine attachment. Transmembrane regions (beta stranded) follow at residues 69 to 85 (INGQ…GINI), 97 to 114 (AGIE…FEFS), 163 to 180 (EFTV…QLDV), and 189 to 205 (GKLK…TVTY). Residues 238–266 (AMALDAAGGVMPSDSALLDEGGLLDLEGF) form a C-terminal region region.

Belongs to the bacterial gasdermin family. As to quaternary structure, monomer in solution. Homooligomer; forms homooligomeric ring-shaped pores when inserted in membranes with 48-54 subunits per ring. Post-translationally, palmitoylation helps stabilize the inactive state; may self palmitoylate. Palmitoylation plays a significant role in pore formation.

It is found in the cytoplasm. The protein resides in the cell inner membrane. The full-length protein before cleavage is inactive: intramolecular interactions between the N-terminal domain and the C-terminal region as well as the lipid modification, mediate autoinhibition. The pyroptosis-like-inducing activity is carried by the released N-terminal domain (Gasdermin bGSDM, N-terminus). Its function is as follows. Precursor of a pore-forming protein involved in defense against bacteriophages. Expression of bGSDM and the neighboring protease gene (Ga0334635_1659) is toxic in E.coli. Cleavage of this precursor by its dedicated protease releases the active moiety (gasdermin bGSDM, N-terminus) which inserts into membranes, forming pores and triggering cell death. Pore-forming protein that causes membrane permeabilization, probably via a pyroptosis-like activity. Makes ring-like pores with an interior pore diameter of 200-300 Angstroms, when integrated in liposomes. The sequence is that of Gasdermin bGSDM from Vitiosangium sp. (strain GDMCC 1.1324).